Reading from the N-terminus, the 480-residue chain is tRNA (guanine(37)-N(1))-methyltransferase (480 aa).

Residues H244, 292–293 (DL), 321–322 (DG), and N342 contribute to the S-adenosyl-L-methionine site.

Belongs to the class I-like SAM-binding methyltransferase superfamily. TRM5/TYW2 family. In terms of assembly, monomer.

It is found in the mitochondrion matrix. Its subcellular location is the nucleus. The protein resides in the cytoplasm. The catalysed reaction is guanosine(37) in tRNA + S-adenosyl-L-methionine = N(1)-methylguanosine(37) in tRNA + S-adenosyl-L-homocysteine + H(+). Functionally, specifically methylates the N1 position of guanosine-37 in various cytoplasmic and mitochondrial tRNAs. Methylation is not dependent on the nature of the nucleoside 5' of the target nucleoside. This is the first step in the biosynthesis of wybutosine (yW), a modified base adjacent to the anticodon of tRNAs and required for accurate decoding. This chain is tRNA (guanine(37)-N(1))-methyltransferase, found in Thalassiosira pseudonana (Marine diatom).